The sequence spans 266 residues: Protein PYRICULARIA ORYZAE RESISTANCE 21 (266 aa).

Positions 1 to 68 (MGILVILVDL…IWCKAGKIIK (68 aa)) constitute an HMA domain. A metal cation-binding residues include C12 and C15. Positions 129–156 (CEKPKPCEKPPPCKPEEPPKPPPEKPPP) are disordered. The segment covering 142-156 (KPEEPPKPPPEKPPP) has biased composition (basic and acidic residues).

In terms of biological role, involved in defense responses. Contributes to slowing defense responses toward Magnaporthe oryzae. The chain is Protein PYRICULARIA ORYZAE RESISTANCE 21 from Oryza sativa subsp. japonica (Rice).